The chain runs to 523 residues: 2-isopropylmalate synthase (523 aa).

The Pyruvate carboxyltransferase domain maps to 5-267 (VIIFDTTLRD…HTNINHHEIW (263 aa)). The Mn(2+) site is built by Asp-14, His-202, His-204, and Asn-238. A regulatory domain region spans residues 392-523 (RLDYFSVQSG…QNKENNKETV (132 aa)).

This sequence belongs to the alpha-IPM synthase/homocitrate synthase family. LeuA type 1 subfamily. As to quaternary structure, homodimer. Mn(2+) is required as a cofactor.

The protein localises to the cytoplasm. The catalysed reaction is 3-methyl-2-oxobutanoate + acetyl-CoA + H2O = (2S)-2-isopropylmalate + CoA + H(+). Its pathway is amino-acid biosynthesis; L-leucine biosynthesis; L-leucine from 3-methyl-2-oxobutanoate: step 1/4. In terms of biological role, catalyzes the condensation of the acetyl group of acetyl-CoA with 3-methyl-2-oxobutanoate (2-ketoisovalerate) to form 3-carboxy-3-hydroxy-4-methylpentanoate (2-isopropylmalate). In Salmonella choleraesuis (strain SC-B67), this protein is 2-isopropylmalate synthase.